Here is a 168-residue protein sequence, read N- to C-terminus: Peptide deformylase 1 (168 aa).

The Fe cation site is built by C92 and H134. The active site involves E135. Fe cation is bound at residue H138.

It belongs to the polypeptide deformylase family. It depends on Fe(2+) as a cofactor.

It catalyses the reaction N-terminal N-formyl-L-methionyl-[peptide] + H2O = N-terminal L-methionyl-[peptide] + formate. Functionally, removes the formyl group from the N-terminal Met of newly synthesized proteins. Requires at least a dipeptide for an efficient rate of reaction. N-terminal L-methionine is a prerequisite for activity but the enzyme has broad specificity at other positions. This chain is Peptide deformylase 1, found in Pseudomonas syringae pv. tomato (strain ATCC BAA-871 / DC3000).